We begin with the raw amino-acid sequence, 417 residues long: Hydroxysteroid dehydrogenase-like protein 2 (417 aa).

NADP(+) contacts are provided by residues Gly17–Gly23, Lys42, and Asp74. The Proton acceptor role is filled by Tyr168. Lys172 lines the NADP(+) pocket. The region spanning Ser306–Asn414 is the SCP2 domain.

Belongs to the short-chain dehydrogenases/reductases (SDR) family.

Its subcellular location is the peroxisome. It localises to the mitochondrion. Functionally, has apparently no steroid dehydrogenase activity. Might act as a metabolic regulator that affects systemic adaptation to nutritional cues. The polypeptide is Hydroxysteroid dehydrogenase-like protein 2 (hsdl2) (Xenopus tropicalis (Western clawed frog)).